We begin with the raw amino-acid sequence, 284 residues long: Probable endonuclease 4 (284 aa).

9 residues coordinate Zn(2+): His-66, His-106, Glu-142, Asp-176, His-179, His-213, Asp-226, His-228, and Glu-258.

Belongs to the AP endonuclease 2 family. Zn(2+) is required as a cofactor.

It catalyses the reaction Endonucleolytic cleavage to 5'-phosphooligonucleotide end-products.. Functionally, endonuclease IV plays a role in DNA repair. It cleaves phosphodiester bonds at apurinic or apyrimidinic (AP) sites, generating a 3'-hydroxyl group and a 5'-terminal sugar phosphate. The sequence is that of Probable endonuclease 4 from Natranaerobius thermophilus (strain ATCC BAA-1301 / DSM 18059 / JW/NM-WN-LF).